The sequence spans 340 residues: Eukaryotic translation initiation factor 3 subunit I (340 aa).

6 WD repeats span residues G8–T47, G50–V89, D91–N135, C150–N189, E194–T233, and G291–M330.

The protein belongs to the eIF-3 subunit I family. In terms of assembly, component of the eukaryotic translation initiation factor 3 (eIF-3) complex.

It localises to the cytoplasm. Functionally, component of the eukaryotic translation initiation factor 3 (eIF-3) complex, which is involved in protein synthesis of a specialized repertoire of mRNAs and, together with other initiation factors, stimulates binding of mRNA and methionyl-tRNAi to the 40S ribosome. The eIF-3 complex specifically targets and initiates translation of a subset of mRNAs involved in cell proliferation. This is Eukaryotic translation initiation factor 3 subunit I from Coccidioides immitis (strain RS) (Valley fever fungus).